The sequence spans 411 residues: Branched-chain-amino-acid aminotransferase, cytosolic (411 aa).

Lys-247 is subject to N6-(pyridoxal phosphate)lysine.

The protein belongs to the class-IV pyridoxal-phosphate-dependent aminotransferase family. Homodimer. It depends on pyridoxal 5'-phosphate as a cofactor. Post-translationally, the N-terminus is blocked. As to expression, brain, low expression in ovary and placenta, but not found in liver, kidney, and skeletal muscle.

The protein resides in the cytoplasm. It carries out the reaction L-leucine + 2-oxoglutarate = 4-methyl-2-oxopentanoate + L-glutamate. It catalyses the reaction L-isoleucine + 2-oxoglutarate = (S)-3-methyl-2-oxopentanoate + L-glutamate. The enzyme catalyses L-valine + 2-oxoglutarate = 3-methyl-2-oxobutanoate + L-glutamate. Its function is as follows. Catalyzes the first reaction in the catabolism of the essential branched chain amino acids leucine, isoleucine, and valine. The sequence is that of Branched-chain-amino-acid aminotransferase, cytosolic (Bcat1) from Rattus norvegicus (Rat).